A 338-amino-acid polypeptide reads, in one-letter code: Nucleoid-associated protein VSAL_I1059 (338 aa).

The segment at 319 to 338 (KGTPPNLKDQLTRRLGSSES) is disordered.

Belongs to the YejK family.

The protein resides in the cytoplasm. Its subcellular location is the nucleoid. The sequence is that of Nucleoid-associated protein VSAL_I1059 from Aliivibrio salmonicida (strain LFI1238) (Vibrio salmonicida (strain LFI1238)).